An 88-amino-acid chain; its full sequence is Insulin-related peptide 4 (88 aa).

The N-terminal stretch at 1 to 19 (MKLTLIILLVVAYSWCSEA) is a signal peptide. Positions 20–45 (QNEARVFCGRVLSERLAALCWGPNSV) are excised as a propeptide. Arg65 is modified (arginine amide). Residues 69-88 (GLATECCDKACTVEELLSYC) constitute a propeptide that is removed on maturation.

This sequence belongs to the insulin family. DAGWWLTRGAARSLGGVR-amide: Expressed in corpora cardiaca (CC), corpora allata (CA), antennal lobe (AL) and gnathal ganglion (GNG) (at protein level). Expression in CC and CA detected in most animals, in AL and GNG in few animals (at protein level).

Its subcellular location is the secreted. This Agrotis ipsilon (Black cutworm moth) protein is Insulin-related peptide 4.